The sequence spans 439 residues: MRLSRYFLPILKETPKEAEIVSHRLMLRAGMLRQEAAGIYAWLPLGHRVLKKIEQIVREEQNRAGAIELLMPTLQLADLWRESGRYDAYGPEMLRIADRHKRELLYGPTNEEMITEIFRAYVKSYKSLPLNLYHIQWKFRDEQRPRFGVMRGREFLMKDAYSFDIDEAAARRAYNRMFVAYLRTFARMGLKAIPMRAETGPIGGDLSHEFIVLAETGESAVYCDSEVLNLPVPGEDVDYDGDLTPIIKQWTSVYAATEDVHEAERFDREVPAERKLHTRGIEVGQIFYFGTKYSEAMKALVAGPDGVEVPIHGGSYGVGVSRLLGAIIEACHDENGIKWPEAVAPFRAAILNLKQGAAETDAACEQLYRELIAKGVDVLYDDTDQRAGAKFATADLIGIPWQILVGPKGLADGTVELKRRADGSRENVALAEAVARLTQ.

It belongs to the class-II aminoacyl-tRNA synthetase family. ProS type 2 subfamily. Homodimer.

Its subcellular location is the cytoplasm. It catalyses the reaction tRNA(Pro) + L-proline + ATP = L-prolyl-tRNA(Pro) + AMP + diphosphate. Its function is as follows. Catalyzes the attachment of proline to tRNA(Pro) in a two-step reaction: proline is first activated by ATP to form Pro-AMP and then transferred to the acceptor end of tRNA(Pro). The protein is Proline--tRNA ligase of Rhodopseudomonas palustris (strain BisA53).